Reading from the N-terminus, the 142-residue chain is Large ribosomal subunit protein uL29 (142 aa).

Belongs to the universal ribosomal protein uL29 family.

In Theileria annulata, this protein is Large ribosomal subunit protein uL29 (RPL35).